Here is a 213-residue protein sequence, read N- to C-terminus: tRNA (guanine-N(7)-)-methyltransferase (213 aa).

S-adenosyl-L-methionine-binding residues include Glu-44, Glu-69, Asn-96, and Asp-118. Asp-118 is a catalytic residue. Position 122 (Lys-122) interacts with substrate. Residues 124–129 form an interaction with RNA region; sequence RHEKRR. Residues Asp-154 and 192 to 195 each bind substrate; that span reads TEYE.

Belongs to the class I-like SAM-binding methyltransferase superfamily. TrmB family.

It carries out the reaction guanosine(46) in tRNA + S-adenosyl-L-methionine = N(7)-methylguanosine(46) in tRNA + S-adenosyl-L-homocysteine. The protein operates within tRNA modification; N(7)-methylguanine-tRNA biosynthesis. Catalyzes the formation of N(7)-methylguanine at position 46 (m7G46) in tRNA. This is tRNA (guanine-N(7)-)-methyltransferase from Latilactobacillus sakei subsp. sakei (strain 23K) (Lactobacillus sakei subsp. sakei).